The chain runs to 276 residues: Caspase-6 (276 aa).

Residues 1–5 (MTETD) constitute a propeptide that is removed on maturation. Residues 25–27 (KRR) are tri-arginine exosite. Phosphoserine is present on serine 62. The active site involves histidine 104. Positions 108-125 (NHVYAYDAKIEIQTLTGL) are 130's region. Residue cysteine 146 is part of the active site. Positions 163–175 (HQTDKLDNVTQVD) are excised as a propeptide. A Phosphoserine modification is found at serine 239. 2 S-palmitoyl cysteine lipidation sites follow: cysteine 246 and cysteine 259.

It belongs to the peptidase C14A family. Heterotetramer that consists of two anti-parallel arranged heterodimers, each one formed by a 18 kDa (p18) and a 11 kDa (p11) subunit. Interacts with BIRC6/bruce. Interacts with RIPK3. As to quaternary structure, heterotetramer that consists of two anti-parallel arranged heterodimers, each one formed by a 18 kDa (Caspase-6 subunit p18) and a 11 kDa (Caspase-6 subunit p11) subunit. In terms of processing, phosphorylated by NUAK1; phosphorylation inhibits self-activation. Phosphorylation at Ser-239 by AMP-activated protein kinase (PRKAA1 or PRKAA2) inhibits autocleavage, preventing caspase activation, thereby preventing hepatocyte apoptosis. Palmitoylation by ZDHHC17 blocks dimerization and subsequent activation, leading to inhibit the cysteine protease activity. Post-translationally, can be cleaved and activated by different caspases, depending on the context. Cleaved and activated by caspase-8 (CASP8) and subsequently by caspase-3 (CASP3). Can also undergo autoactivation by mediating autocleavage at Asp-162 and Asp-175, while it is not able to cleave its N-terminal disordered prodomain. Cleaved and activated by CASP1, possibly in the context of inflammation. As to expression, highly expressed in lung, liver, kidney, testis, and heart. Lower levels in spleen, skeletal muscle and brain. Expressed in neurons.

It localises to the cytoplasm. The protein localises to the nucleus. It catalyses the reaction Strict requirement for Asp at position P1 and has a preferred cleavage sequence of Val-Glu-His-Asp-|-.. During activation, the N-terminal disordered prodomain is removed by cleavage. Concomitantly, double cleavage gives rise to a large 18-kDa and a small 11-kDa subunit. The two large and two small subunits then assemble to form the active CASP6 complex. Can be cleaved and activated by different caspases, depending on the context. Cleaved and activated by caspase-8 (CASP8) and subsequently by caspase-3 (CASP3). Can also undergo autoactivation by mediating autocleavage at Asp-162 and Asp-175, while it is not able to cleave its N-terminal disordered prodomain. Intramolecular cleavage at Asp-175 is a prerequisite for CASP6 self-activation. Cleaved and activated by CASP1 in neurons, possibly in the context of inflammation. Phosphorylation at Ser-239 inhibits autocleavage, preventing caspase activation. Cysteine protease that plays essential roles in programmed cell death, axonal degeneration, development and innate immunity. Acts as a non-canonical executioner caspase during apoptosis: localizes in the nucleus and cleaves the nuclear structural protein NUMA1 and lamin A/LMNA thereby inducing nuclear shrinkage and fragmentation. Lamin-A/LMNA cleavage is required for chromatin condensation and nuclear disassembly during apoptotic execution. Acts as a regulator of liver damage by promoting hepatocyte apoptosis: in absence of phosphorylation by AMP-activated protein kinase (AMPK), catalyzes cleavage of BID, leading to cytochrome c release, thereby participating in nonalcoholic steatohepatitis. Cleaves PARK7/DJ-1 in cells undergoing apoptosis. Involved in intrinsic apoptosis by mediating cleavage of RIPK1. Furthermore, cleaves many transcription factors such as NF-kappa-B and cAMP response element-binding protein/CREBBP. Cleaves phospholipid scramblase proteins XKR4 and XKR9. In addition to apoptosis, involved in different forms of programmed cell death. Plays an essential role in defense against viruses by acting as a central mediator of the ZBP1-mediated pyroptosis, apoptosis, and necroptosis (PANoptosis), independently of its cysteine protease activity. PANoptosis is a unique inflammatory programmed cell death, which provides a molecular scaffold that allows the interactions and activation of machinery required for inflammasome/pyroptosis, apoptosis and necroptosis. Mechanistically, interacts with RIPK3 and enhances the interaction between RIPK3 and ZBP1, leading to ZBP1-mediated inflammasome activation and cell death. Plays an essential role in axon degeneration during axon pruning which is the remodeling of axons during neurogenesis but not apoptosis. Regulates B-cell programs both during early development and after antigen stimulation. Functionally, (Microbial infection) Proteolytically cleaves the N protein of coronaviruses. The cleavage leads to two fragments and modulates coronavirus replication by regulating IFN signaling. The two fragments produced by the cleavage interact with IRF3 inhibiting its nuclear translocation after activation and reduce the expression of IFNB and IFN-stimulated genes. This chain is Caspase-6, found in Mus musculus (Mouse).